Consider the following 202-residue polypeptide: Na(+)-translocating NADH-quinone reductase subunit E (202 aa).

The next 6 membrane-spanning stretches (helical) occupy residues 11-31, 35-55, 79-99, 114-134, 144-164, and 180-200; these read AVFV…FIAI, VETA…TMPV, LSFL…QILE, GVFL…LFMV, TVYG…LAGI, and LGIT…FSGV.

It belongs to the NqrDE/RnfAE family. In terms of assembly, composed of six subunits; NqrA, NqrB, NqrC, NqrD, NqrE and NqrF.

It localises to the cell inner membrane. It catalyses the reaction a ubiquinone + n Na(+)(in) + NADH + H(+) = a ubiquinol + n Na(+)(out) + NAD(+). Functionally, NQR complex catalyzes the reduction of ubiquinone-1 to ubiquinol by two successive reactions, coupled with the transport of Na(+) ions from the cytoplasm to the periplasm. NqrA to NqrE are probably involved in the second step, the conversion of ubisemiquinone to ubiquinol. This chain is Na(+)-translocating NADH-quinone reductase subunit E, found in Ectopseudomonas mendocina (strain ymp) (Pseudomonas mendocina).